Consider the following 449-residue polypeptide: Na(+)/H(+) antiporter NhaA 1 (449 aa).

The next 11 membrane-spanning stretches (helical) occupy residues Gly38–Ala58, Phe79–Met99, Val117–Phe137, Ala145–Val165, Val175–Phe195, Ser198–Leu218, Met240–Ala260, Phe311–Asn331, Pro347–Phe367, Gly390–Phe410, and Leu422–Val442.

The protein belongs to the NhaA Na(+)/H(+) (TC 2.A.33) antiporter family.

It is found in the cell inner membrane. It catalyses the reaction Na(+)(in) + 2 H(+)(out) = Na(+)(out) + 2 H(+)(in). Na(+)/H(+) antiporter that extrudes sodium in exchange for external protons. The polypeptide is Na(+)/H(+) antiporter NhaA 1 (Myxococcus xanthus (strain DK1622)).